Here is a 213-residue protein sequence, read N- to C-terminus: MTDQSHQCVIIGISGASASGKSLISSTLYRELRDQVGDQHIGVISEDSYYKDQSHLTMEERVKTNYDHPSSMDHSLLLKHLQMLKAGQAIEVPQYSYVEHTRKQETVHIELKKVIILEGILLLTDARLRDEMNFSIFVDTPLDICLLRRMRRDVNERGRSMDSVMEQYQKTVRPMFLQFIEPSKQYADIIVPRGGKNRIAIDILKAKISQFFE.

Position 15–22 (Gly-15–Ser-22) interacts with ATP.

This sequence belongs to the uridine kinase family.

It localises to the cytoplasm. The catalysed reaction is uridine + ATP = UMP + ADP + H(+). It carries out the reaction cytidine + ATP = CMP + ADP + H(+). Its pathway is pyrimidine metabolism; CTP biosynthesis via salvage pathway; CTP from cytidine: step 1/3. The protein operates within pyrimidine metabolism; UMP biosynthesis via salvage pathway; UMP from uridine: step 1/1. This Pectobacterium carotovorum subsp. carotovorum (strain PC1) protein is Uridine kinase.